The chain runs to 189 residues: 3-isopropylmalate dehydratase small subunit (189 aa).

Belongs to the LeuD family. LeuD type 1 subfamily. As to quaternary structure, heterodimer of LeuC and LeuD.

The enzyme catalyses (2R,3S)-3-isopropylmalate = (2S)-2-isopropylmalate. Its pathway is amino-acid biosynthesis; L-leucine biosynthesis; L-leucine from 3-methyl-2-oxobutanoate: step 2/4. Functionally, catalyzes the isomerization between 2-isopropylmalate and 3-isopropylmalate, via the formation of 2-isopropylmaleate. The polypeptide is 3-isopropylmalate dehydratase small subunit (Francisella philomiragia subsp. philomiragia (strain ATCC 25017 / CCUG 19701 / FSC 153 / O#319-036)).